Reading from the N-terminus, the 243-residue chain is Juxtaposed with another zinc finger protein 1 (243 aa).

Residues 12–37 (NTCRFGGCGLHFPTLADLIEHIEDNH) form a C2H2-type 1 zinc finger. Residues 39 to 79 (DTDPRVLEKQELQQPTYVALSYINRFMTDAARREQESLKKK) form a required for interaction with NR2C2 region. A compositionally biased stretch (polar residues) spans 89–108 (SSSVSRGNVSTPPRHSSGSL). The interval 89–151 (SSSVSRGNVS…SDSDESWTTE (63 aa)) is disordered. Phosphothreonine occurs at positions 109 and 113. Over residues 118–130 (PSSSFRSSTPTGS) the composition is skewed to low complexity. The span at 131–148 (EYDEEEVDYEESDSDESW) shows a compositional bias: acidic residues. Residues 173 to 198 (FACPVPGCKKRYKNVNGIKYHAKNGH) form a C2H2-type 2 zinc finger. The C2H2-type 3; degenerate zinc finger occupies 208 to 230 (FKCRCGKSYKTAQGLRHHTINFH).

Interacts with NR2C2 (via ligand-binding region). As to expression, expressed in range of tissues with highest expression levels in testis, liver, muscle and fat and lowest levels in kidney. Detected in liver and white adipose tissue (at protein level).

It localises to the nucleus. Acts as a transcriptional corepressor of orphan nuclear receptor NR2C2. Inhibits expression of the gluconeogenesis enzyme PCK2 through inhibition of NR2C2 activity. Also involved in transcriptional activation of NAMPT by promoting expression of PPARA and PPARD. Plays a role in lipid metabolism by suppressing lipogenesis, increasing lipolysis and decreasing lipid accumulation in adipose tissue. Plays a role in glucose homeostasis by improving glucose metabolism and insulin sensitivity. The protein is Juxtaposed with another zinc finger protein 1 (Jazf1) of Mus musculus (Mouse).